The sequence spans 533 residues: Chromosomal replication initiator protein DnaA (533 aa).

Positions 1-72 (MNDFWQHCSA…DLARDFWNAP (72 aa)) are domain I, interacts with DnaA modulators. Residues 72-196 (PIEVQFVLDP…EAADSMYERS (125 aa)) are domain II. Residues 83–113 (AGQRSPAGATPLAPRAPLPSANPAPVAPGPA) are disordered. Residues 96–110 (PRAPLPSANPAPVAP) show a composition bias toward pro residues. Positions 197–413 (KLNPVLTFDN…GALRKILAYS (217 aa)) are domain III, AAA+ region. The ATP site is built by Gly241, Gly243, Lys244, and Thr245. Positions 414–533 (KFHGREITIE…LHVLEQTLKG (120 aa)) are domain IV, binds dsDNA.

It belongs to the DnaA family. As to quaternary structure, oligomerizes as a right-handed, spiral filament on DNA at oriC.

It is found in the cytoplasm. In terms of biological role, plays an essential role in the initiation and regulation of chromosomal replication. ATP-DnaA binds to the origin of replication (oriC) to initiate formation of the DNA replication initiation complex once per cell cycle. Binds the DnaA box (a 9 base pair repeat at the origin) and separates the double-stranded (ds)DNA. Forms a right-handed helical filament on oriC DNA; dsDNA binds to the exterior of the filament while single-stranded (ss)DNA is stabiized in the filament's interior. The ATP-DnaA-oriC complex binds and stabilizes one strand of the AT-rich DNA unwinding element (DUE), permitting loading of DNA polymerase. After initiation quickly degrades to an ADP-DnaA complex that is not apt for DNA replication. Binds acidic phospholipids. The protein is Chromosomal replication initiator protein DnaA of Burkholderia mallei (strain SAVP1).